The chain runs to 554 residues: Nonribosomal peptide synthetase ALT12 (554 aa).

The 76-residue stretch at 1–76 folds into the Carrier domain; the sequence is MASLEHMKRI…TLWEAMNDTQ (76 aa). An O-(pantetheine 4'-phosphoryl)serine modification is found at serine 35. The segment at 124–434 is condensation; sequence VQDNVLCVAP…QRIQNEITST (311 aa).

The protein belongs to the NRP synthetase family.

It participates in mycotoxin biosynthesis. In terms of biological role, nonribosomal peptide synthetase; part of the gene cluster that mediates the biosynthesis of the host-selective toxins (HSTs) AAL-toxins, sphinganine-analog mycotoxins responsible for Alternaria stem canker on tomato by the tomato pathotype. The biosynthesis starts with the polyketide synthase ALT1-catalyzed C-16 carbon chain assembly from one starter acetyl-CoA unit with malonyl-CoA extender units. ALT1 also selectively transfers methyl groups at the first and the third cycle of chain elongation for AAL toxin. The C-16 polyketide chain is released from the enzyme by a nucleophilic attack of a carbanion, which is derived from R-carbon of glycin by decarboxylation, on the carbonyl carbon of polyketide acyl chain. This step is probably catalyzed by a pyridoxal 5'-phosphate-dependent aminoacyl transferase ALT4. The respective functions of the other enzymes encoded by the cluster have still to be elucidated. The sphingosine N-acyltransferase-like protein ALT7 seems not to act as a resistance/self-tolerance factor against the toxin in the toxin biosynthetic gene cluster, contrary to what is expected. This chain is Nonribosomal peptide synthetase ALT12, found in Alternaria alternata (Alternaria rot fungus).